We begin with the raw amino-acid sequence, 113 residues long: DNA-binding protein PTO0204 (113 aa).

Belongs to the PDCD5 family.

This chain is DNA-binding protein PTO0204, found in Picrophilus torridus (strain ATCC 700027 / DSM 9790 / JCM 10055 / NBRC 100828 / KAW 2/3).